Here is a 335-residue protein sequence, read N- to C-terminus: Aliphatic sulfonates import ATP-binding protein SsuB (335 aa).

The tract at residues 29 to 61 (DGDAQDAAVYERDGGAHAPPFASGGAPPDGDRA) is disordered. An ABC transporter domain is found at 74–293 (VRLTRVSKRY…ARASAAFAAL (220 aa)). 106–113 (GRSGCGKS) is a binding site for ATP. Positions 308–335 (APAAPNAAGPEGASRGRAAPASGLRWAV) are disordered.

The protein belongs to the ABC transporter superfamily. Aliphatic sulfonates importer (TC 3.A.1.17.2) family. As to quaternary structure, the complex is composed of two ATP-binding proteins (SsuB), two transmembrane proteins (SsuC) and a solute-binding protein (SsuA).

It localises to the cell inner membrane. The enzyme catalyses ATP + H2O + aliphatic sulfonate-[sulfonate-binding protein]Side 1 = ADP + phosphate + aliphatic sulfonateSide 2 + [sulfonate-binding protein]Side 1.. Functionally, part of the ABC transporter complex SsuABC involved in aliphatic sulfonates import. Responsible for energy coupling to the transport system. In Burkholderia pseudomallei (strain 1710b), this protein is Aliphatic sulfonates import ATP-binding protein SsuB.